A 686-amino-acid polypeptide reads, in one-letter code: Translation initiation factor IF-2 (686 aa).

Residues methionine 35–arginine 99 are disordered. The span at leucine 50–lysine 68 shows a compositional bias: basic and acidic residues. Positions aspartate 69–methionine 79 are enriched in basic residues. Positions glutamate 87 to arginine 99 are enriched in basic and acidic residues. Residues leucine 186 to lysine 355 enclose the tr-type G domain. The segment at glycine 195 to threonine 202 is G1. Glycine 195–threonine 202 contacts GTP. Positions glycine 220 to histidine 224 are G2. The tract at residues aspartate 241 to glycine 244 is G3. GTP-binding positions include aspartate 241 to histidine 245 and asparagine 295 to aspartate 298. The G4 stretch occupies residues asparagine 295–aspartate 298. Positions serine 331–leucine 333 are G5.

The protein belongs to the TRAFAC class translation factor GTPase superfamily. Classic translation factor GTPase family. IF-2 subfamily.

The protein resides in the cytoplasm. One of the essential components for the initiation of protein synthesis. Protects formylmethionyl-tRNA from spontaneous hydrolysis and promotes its binding to the 30S ribosomal subunits. Also involved in the hydrolysis of GTP during the formation of the 70S ribosomal complex. The protein is Translation initiation factor IF-2 of Halothermothrix orenii (strain H 168 / OCM 544 / DSM 9562).